The following is a 264-amino-acid chain: Thymidylate synthase (264 aa).

Position 21 (R21) interacts with dUMP. H51 is a (6R)-5,10-methylene-5,6,7,8-tetrahydrofolate binding site. R126–R127 lines the dUMP pocket. C146 functions as the Nucleophile in the catalytic mechanism. Residues R166–D169, N177, and H207–Y209 contribute to the dUMP site. Residue D169 coordinates (6R)-5,10-methylene-5,6,7,8-tetrahydrofolate. A263 contacts (6R)-5,10-methylene-5,6,7,8-tetrahydrofolate.

Belongs to the thymidylate synthase family. Bacterial-type ThyA subfamily. Homodimer.

The protein resides in the cytoplasm. The catalysed reaction is dUMP + (6R)-5,10-methylene-5,6,7,8-tetrahydrofolate = 7,8-dihydrofolate + dTMP. It participates in pyrimidine metabolism; dTTP biosynthesis. Its function is as follows. Catalyzes the reductive methylation of 2'-deoxyuridine-5'-monophosphate (dUMP) to 2'-deoxythymidine-5'-monophosphate (dTMP) while utilizing 5,10-methylenetetrahydrofolate (mTHF) as the methyl donor and reductant in the reaction, yielding dihydrofolate (DHF) as a by-product. This enzymatic reaction provides an intracellular de novo source of dTMP, an essential precursor for DNA biosynthesis. In Porphyromonas gingivalis (strain ATCC BAA-308 / W83), this protein is Thymidylate synthase.